Reading from the N-terminus, the 281-residue chain is Pantothenate synthetase (281 aa).

Residue 30–37 (MGNLHQGH) coordinates ATP. Residue His37 is the Proton donor of the active site. Position 61 (Gln61) interacts with (R)-pantoate. Beta-alanine is bound at residue Gln61. 149–152 (GNKD) is a binding site for ATP. Residue Gln155 participates in (R)-pantoate binding. ATP is bound by residues Ile178 and 186–189 (MSSR).

It belongs to the pantothenate synthetase family. Homodimer.

The protein resides in the cytoplasm. The catalysed reaction is (R)-pantoate + beta-alanine + ATP = (R)-pantothenate + AMP + diphosphate + H(+). The protein operates within cofactor biosynthesis; (R)-pantothenate biosynthesis; (R)-pantothenate from (R)-pantoate and beta-alanine: step 1/1. In terms of biological role, catalyzes the condensation of pantoate with beta-alanine in an ATP-dependent reaction via a pantoyl-adenylate intermediate. This chain is Pantothenate synthetase, found in Shewanella baltica (strain OS155 / ATCC BAA-1091).